A 237-amino-acid chain; its full sequence is Ribosomal RNA small subunit methyltransferase G (237 aa).

Residues Gly-78, Phe-83, 129–130, and Arg-148 contribute to the S-adenosyl-L-methionine site; that span reads AE.

This sequence belongs to the methyltransferase superfamily. RNA methyltransferase RsmG family.

The protein localises to the cytoplasm. Its function is as follows. Specifically methylates the N7 position of a guanine in 16S rRNA. This Streptococcus pyogenes serotype M6 (strain ATCC BAA-946 / MGAS10394) protein is Ribosomal RNA small subunit methyltransferase G.